Here is a 656-residue protein sequence, read N- to C-terminus: Methylenetetrahydrofolate reductase (NADPH) (656 aa).

Residues 1 to 12 show a composition bias toward polar residues; that stretch reads MVNEARGNSSLN. Positions 1-44 are disordered; the sequence is MVNEARGNSSLNPCLEGSASSGSESSKDSSRCSTPGLDPERHER. Phosphoserine is present on residues Ser9, Ser10, Ser18, Ser20, Ser21, Ser23, Ser25, Ser26, Ser29, and Ser30. Thr34 carries the phosphothreonine modification. The active-site Proton donor/acceptor is the Glu63. NAD(+) is bound at residue 63–68; that stretch reads EFFPPR. A Phosphotyrosine modification is found at Tyr90. Thr94 bears the Phosphothreonine mark. NAD(+) is bound at residue 94–95; it reads TW. Residue 94–95 coordinates FAD; that stretch reads TW. A Phosphoserine modification is found at Ser103. FAD-binding positions include His127, 157 to 159, 174 to 175, Tyr197, 201 to 204, Asp210, and Lys217; these read RGD, YA, and HPEA. Asp159 contributes to the substrate binding site. Substrate is bound by residues Gln228, Tyr321, and Arg325. The residue at position 394 (Ser394) is a Phosphoserine. At Thr451 the chain carries Phosphothreonine. Residues Asn456, 461–464, 481–485, Thr560, and Thr573 each bind S-adenosyl-L-methionine; these read AAET and TINSQ.

This sequence belongs to the methylenetetrahydrofolate reductase family. As to quaternary structure, homodimer. The cofactor is FAD. In terms of processing, phosphorylation of an N-terminal serine-rich phosphorylation region increases sensitivity to S-adenosylmethionine and inhibition.

The enzyme catalyses (6S)-5-methyl-5,6,7,8-tetrahydrofolate + NADP(+) = (6R)-5,10-methylene-5,6,7,8-tetrahydrofolate + NADPH + H(+). Its pathway is one-carbon metabolism; tetrahydrofolate interconversion. With respect to regulation, allosterically regulated by S-adenosylmethionine (SAM). In terms of biological role, catalyzes the conversion of 5,10-methylenetetrahydrofolate to 5-methyltetrahydrofolate, a cosubstrate for homocysteine remethylation to methionine. Represents a key regulatory connection between the folate and methionine cycles. The chain is Methylenetetrahydrofolate reductase (NADPH) from Homo sapiens (Human).